We begin with the raw amino-acid sequence, 160 residues long: Cytochrome b6-f complex subunit 4 (160 aa).

3 consecutive transmembrane segments (helical) span residues 36–56 (LLYMFPVVILGTFALSISLAV), 95–115 (LLGVLCMAAVPVGLITVPFIE), and 131–151 (TLFLFGTATAVWLGIGAALPI).

This sequence belongs to the cytochrome b family. PetD subfamily. In terms of assembly, the 4 large subunits of the cytochrome b6-f complex are cytochrome b6, subunit IV (17 kDa polypeptide, petD), cytochrome f and the Rieske protein, while the 4 small subunits are petG, petL, petM and petN. The complex functions as a dimer.

The protein resides in the plastid. Its subcellular location is the chloroplast thylakoid membrane. Its function is as follows. Component of the cytochrome b6-f complex, which mediates electron transfer between photosystem II (PSII) and photosystem I (PSI), cyclic electron flow around PSI, and state transitions. The polypeptide is Cytochrome b6-f complex subunit 4 (Oltmannsiellopsis viridis (Marine flagellate)).